We begin with the raw amino-acid sequence, 205 residues long: Troponin I, cardiac muscle (205 aa).

The tract at residues 1 to 38 (MADQSGNAAPPPVRRRSSANYRAYATEPHAKKKSKISA) is disordered. A2 bears the N-acetylalanine mark. Residue S5 is modified to Phosphoserine. S17 and S18 each carry phosphoserine; by PKA and PKD/PRKD1. Y21 is modified (phosphotyrosine). Position 26 is a phosphothreonine; by STK4/MST1 (T26). The involved in binding TNC stretch occupies residues 27-74 (EPHAKKKSKISASRKLQLKTLMLQIAKQELEREAVERRGEKGRALSTR). Phosphoserine; by PKC/PRKCE occurs at positions 37 and 39. T46 carries the phosphothreonine; by STK4/MST1 modification. At S72 the chain carries Phosphoserine. T73 is modified (phosphothreonine). The interval 124–145 (NQKIFDLRGKFKRPTLRRVRIS) is involved in binding TNC and actin. Residue T138 is modified to Phosphothreonine; by STK4/MST1. S145 carries the post-translational modification Phosphoserine; by PAK3. T176 carries the phosphothreonine modification. S194 is subject to Phosphoserine.

The protein belongs to the troponin I family. In terms of assembly, binds to actin and tropomyosin. Interacts with TRIM63. Interacts with STK4/MST1. In terms of processing, phosphorylated at Ser-17 and Ser-18 by PRKD1; phosphorylation reduces myofilament calcium sensitivity. Phosphorylated preferentially at Thr-26. Phosphorylation by STK4/MST1 alters its binding affinity to TNNC1 (cardiac Tn-C) and TNNT2 (cardiac Tn-T). Phosphorylated at Ser-37 and Ser-39 by PRKCE; phosphorylation increases myocardium contractile dysfunction.

In terms of biological role, troponin I is the inhibitory subunit of troponin, the thin filament regulatory complex which confers calcium-sensitivity to striated muscle actomyosin ATPase activity. This chain is Troponin I, cardiac muscle (TNNI3), found in Equus caballus (Horse).